A 189-amino-acid polypeptide reads, in one-letter code: Chitin synthase 1 (189 aa).

This sequence belongs to the chitin synthase family. Class I subfamily.

The protein localises to the cell membrane. The enzyme catalyses [(1-&gt;4)-N-acetyl-beta-D-glucosaminyl](n) + UDP-N-acetyl-alpha-D-glucosamine = [(1-&gt;4)-N-acetyl-beta-D-glucosaminyl](n+1) + UDP + H(+). In terms of biological role, polymerizes chitin, a structural polymer of the cell wall and septum, by transferring the sugar moiety of UDP-GlcNAc to the non-reducing end of the growing chitin polymer. The protein is Chitin synthase 1 (CHS1) of Ajellomyces capsulatus (Darling's disease fungus).